A 238-amino-acid polypeptide reads, in one-letter code: Large ribosomal subunit protein uL1 (238 aa).

It belongs to the universal ribosomal protein uL1 family. In terms of assembly, part of the 50S ribosomal subunit.

Functionally, binds directly to 23S rRNA. The L1 stalk is quite mobile in the ribosome, and is involved in E site tRNA release. In terms of biological role, protein L1 is also a translational repressor protein, it controls the translation of the L11 operon by binding to its mRNA. This Trichodesmium erythraeum (strain IMS101) protein is Large ribosomal subunit protein uL1.